We begin with the raw amino-acid sequence, 301 residues long: uncharacterized protein (301 aa).

Residues Ser44 and Tyr107 each act as charge relay system in the active site. The Proton donor role is filled by Tyr133. The active-site Schiff-base intermediate with substrate is the Lys162.

This sequence belongs to the DapA family. As to quaternary structure, homotetramer.

It is found in the cytoplasm. This is an uncharacterized protein from Pyrobaculum neutrophilum (strain DSM 2338 / JCM 9278 / NBRC 100436 / V24Sta) (Thermoproteus neutrophilus).